We begin with the raw amino-acid sequence, 152 residues long: Nucleoside diphosphate kinase B (152 aa).

The segment at 1–66 (MAHQERTFIA…DRPFYPGLVK (66 aa)) is interaction with AKAP13. ATP-binding residues include lysine 12, phenylalanine 60, arginine 88, threonine 94, arginine 105, and asparagine 115. The Pros-phosphohistidine intermediate role is filled by histidine 118.

The protein belongs to the NDK family. As to quaternary structure, hexamer of two different chains: An and B (A6, A5B, A4B2, A3B3, A2B4, AB5, B6). Interacts with CAPN8. Interacts with AKAP13. Interacts with ITGB1BP1 (via C-terminal domain region). Interacts with BCL2L10. It depends on Mg(2+) as a cofactor. Ubiquitous.

The protein resides in the cytoplasm. The protein localises to the cell projection. Its subcellular location is the lamellipodium. It is found in the ruffle. It localises to the nucleus. The enzyme catalyses a 2'-deoxyribonucleoside 5'-diphosphate + ATP = a 2'-deoxyribonucleoside 5'-triphosphate + ADP. The catalysed reaction is a ribonucleoside 5'-diphosphate + ATP = a ribonucleoside 5'-triphosphate + ADP. It carries out the reaction ATP + protein L-histidine = ADP + protein N-phospho-L-histidine.. Functionally, major role in the synthesis of nucleoside triphosphates other than ATP. The ATP gamma phosphate is transferred to the NDP beta phosphate via a ping-pong mechanism, using a phosphorylated active-site intermediate. Negatively regulates Rho activity by interacting with AKAP13/LBC. Acts as a transcriptional activator of the MYC gene; binds DNA non-specifically. Binds to both single-stranded guanine- and cytosine-rich strands within the nuclease hypersensitive element (NHE) III(1) region of the MYC gene promoter. Does not bind to duplex NHE III(1). Has G-quadruplex (G4) DNA-binding activity, which is independent of its nucleotide-binding and kinase activity. Binds both folded and unfolded G4 with similar low nanomolar affinities. Stabilizes folded G4s regardless of whether they are prefolded or not. Exhibits histidine protein kinase activity. The chain is Nucleoside diphosphate kinase B (NME2) from Canis lupus familiaris (Dog).